The following is a 120-amino-acid chain: NAD(P)H-quinone oxidoreductase subunit 3, chloroplastic (120 aa).

3 consecutive transmembrane segments (helical) span residues 9 to 29 (IFWTFLIIASLIPILVFWISG), 64 to 84 (MFALVFVVFDVETVFLYPWAM), and 88 to 108 (VLGVSVFIEAFIFVLILVVGL).

This sequence belongs to the complex I subunit 3 family. As to quaternary structure, NDH is composed of at least 16 different subunits, 5 of which are encoded in the nucleus.

It is found in the plastid. The protein resides in the chloroplast thylakoid membrane. It catalyses the reaction a plastoquinone + NADH + (n+1) H(+)(in) = a plastoquinol + NAD(+) + n H(+)(out). The enzyme catalyses a plastoquinone + NADPH + (n+1) H(+)(in) = a plastoquinol + NADP(+) + n H(+)(out). Its function is as follows. NDH shuttles electrons from NAD(P)H:plastoquinone, via FMN and iron-sulfur (Fe-S) centers, to quinones in the photosynthetic chain and possibly in a chloroplast respiratory chain. The immediate electron acceptor for the enzyme in this species is believed to be plastoquinone. Couples the redox reaction to proton translocation, and thus conserves the redox energy in a proton gradient. The protein is NAD(P)H-quinone oxidoreductase subunit 3, chloroplastic of Zea mays (Maize).